The chain runs to 159 residues: Putative pre-16S rRNA nuclease (159 aa).

Belongs to the YqgF nuclease family.

Its subcellular location is the cytoplasm. In terms of biological role, could be a nuclease involved in processing of the 5'-end of pre-16S rRNA. The protein is Putative pre-16S rRNA nuclease of Bartonella quintana (strain Toulouse) (Rochalimaea quintana).